Reading from the N-terminus, the 400-residue chain is Enoyl-[acyl-carrier-protein] reductase [NADH] (400 aa).

Residues Gly-48–Tyr-53, Phe-74–Glu-75, Asp-111–Ala-112, and Leu-139–Ala-140 each bind NAD(+). Tyr-225 is a binding site for substrate. Tyr-235 serves as the catalytic Proton donor. NAD(+) contacts are provided by residues Lys-244 and Val-273–Thr-275.

This sequence belongs to the TER reductase family. Monomer.

It catalyses the reaction a 2,3-saturated acyl-[ACP] + NAD(+) = a (2E)-enoyl-[ACP] + NADH + H(+). The protein operates within lipid metabolism; fatty acid biosynthesis. Its function is as follows. Involved in the final reduction of the elongation cycle of fatty acid synthesis (FAS II). Catalyzes the reduction of a carbon-carbon double bond in an enoyl moiety that is covalently linked to an acyl carrier protein (ACP). The sequence is that of Enoyl-[acyl-carrier-protein] reductase [NADH] from Burkholderia cenocepacia (strain ATCC BAA-245 / DSM 16553 / LMG 16656 / NCTC 13227 / J2315 / CF5610) (Burkholderia cepacia (strain J2315)).